The sequence spans 732 residues: Catalase-peroxidase (732 aa).

The tryptophyl-tyrosyl-methioninium (Trp-Tyr) (with M-246) cross-link spans 97–220 (WHSAGTYRTS…LAAVQMGLIY (124 aa)). Catalysis depends on histidine 98, which acts as the Proton acceptor. The segment at residues 220-246 (YVNPEGPDGNPDPVAAGRDIRETFARM) is a cross-link (tryptophyl-tyrosyl-methioninium (Tyr-Met) (with W-97)). Residue histidine 261 participates in heme b binding.

This sequence belongs to the peroxidase family. Peroxidase/catalase subfamily. As to quaternary structure, homodimer or homotetramer. Requires heme b as cofactor. In terms of processing, formation of the three residue Trp-Tyr-Met cross-link is important for the catalase, but not the peroxidase activity of the enzyme.

It catalyses the reaction H2O2 + AH2 = A + 2 H2O. The catalysed reaction is 2 H2O2 = O2 + 2 H2O. Bifunctional enzyme with both catalase and broad-spectrum peroxidase activity. This is Catalase-peroxidase from Chlorobium phaeobacteroides (strain DSM 266 / SMG 266 / 2430).